The sequence spans 464 residues: ATP synthase subunit beta (464 aa).

Residue 153 to 160 participates in ATP binding; it reads GGAGVGKT.

The protein belongs to the ATPase alpha/beta chains family. F-type ATPases have 2 components, CF(1) - the catalytic core - and CF(0) - the membrane proton channel. CF(1) has five subunits: alpha(3), beta(3), gamma(1), delta(1), epsilon(1). CF(0) has three main subunits: a(1), b(2) and c(9-12). The alpha and beta chains form an alternating ring which encloses part of the gamma chain. CF(1) is attached to CF(0) by a central stalk formed by the gamma and epsilon chains, while a peripheral stalk is formed by the delta and b chains.

The protein resides in the cell inner membrane. It carries out the reaction ATP + H2O + 4 H(+)(in) = ADP + phosphate + 5 H(+)(out). Its function is as follows. Produces ATP from ADP in the presence of a proton gradient across the membrane. The catalytic sites are hosted primarily by the beta subunits. The polypeptide is ATP synthase subunit beta (Burkholderia orbicola (strain MC0-3)).